The primary structure comprises 118 residues: V-type proton ATPase subunit G 2 (118 aa).

The interval 26-90 is disordered; it reads RKRKARRLKQ…VQGMQSSQQR (65 aa). The span at 35 to 55 shows a compositional bias: basic and acidic residues; it reads QAKEEAQMEVEQYRREREQEF. Polar residues-rich tracts occupy residues 56–69 and 78–89; these read QSKQ…QGNL and RRQVQGMQSSQQ.

This sequence belongs to the V-ATPase G subunit family. In terms of assembly, V-ATPase is a heteromultimeric enzyme made up of two complexes: the ATP-hydrolytic V1 complex and the proton translocation V0 complex. The V1 complex consists of three catalytic AB heterodimers that form a heterohexamer, three peripheral stalks each consisting of EG heterodimers, one central rotor including subunits D and F, and the regulatory subunits C and H. The proton translocation complex V0 consists of the proton transport subunit a, a ring of proteolipid subunits c9c'', rotary subunit d, subunits e and f, and the accessory subunits ATP6AP1/Ac45 and ATP6AP2/PRR.

It is found in the melanosome. Its subcellular location is the cytoplasmic vesicle. The protein localises to the clathrin-coated vesicle membrane. Subunit of the V1 complex of vacuolar(H+)-ATPase (V-ATPase), a multisubunit enzyme composed of a peripheral complex (V1) that hydrolyzes ATP and a membrane integral complex (V0) that translocates protons. V-ATPase is responsible for acidifying and maintaining the pH of intracellular compartments and in some cell types, is targeted to the plasma membrane, where it is responsible for acidifying the extracellular environment. The sequence is that of V-type proton ATPase subunit G 2 (ATP6V1G2) from Sus scrofa (Pig).